Here is a 315-residue protein sequence, read N- to C-terminus: Beta-ketoacyl-[acyl-carrier-protein] synthase III (315 aa).

Catalysis depends on residues Cys115 and His244. An ACP-binding region spans residues 245–249; sequence QANAR. The active site involves Asn274.

Belongs to the thiolase-like superfamily. FabH family. Homodimer.

It localises to the cytoplasm. It carries out the reaction malonyl-[ACP] + acetyl-CoA + H(+) = 3-oxobutanoyl-[ACP] + CO2 + CoA. The protein operates within lipid metabolism; fatty acid biosynthesis. Functionally, catalyzes the condensation reaction of fatty acid synthesis by the addition to an acyl acceptor of two carbons from malonyl-ACP. Catalyzes the first condensation reaction which initiates fatty acid synthesis and may therefore play a role in governing the total rate of fatty acid production. Possesses both acetoacetyl-ACP synthase and acetyl transacylase activities. Its substrate specificity determines the biosynthesis of branched-chain and/or straight-chain of fatty acids. The sequence is that of Beta-ketoacyl-[acyl-carrier-protein] synthase III from Rubrobacter xylanophilus (strain DSM 9941 / JCM 11954 / NBRC 16129 / PRD-1).